A 334-amino-acid chain; its full sequence is Holliday junction branch migration complex subunit RuvB (334 aa).

Positions 4 to 184 (ADRLIQPQLQ…FGIPLRLEFY (181 aa)) are large ATPase domain (RuvB-L). Residues arginine 24, glycine 65, lysine 68, threonine 69, threonine 70, 131–133 (EDY), arginine 174, tyrosine 184, and arginine 221 each bind ATP. Threonine 69 serves as a coordination point for Mg(2+). The small ATPAse domain (RuvB-S) stretch occupies residues 185–255 (NVKDLSTIVT…VAEHALDLLD (71 aa)). The segment at 258-334 (GEGFDYMDRK…YLHFGMIKPE (77 aa)) is head domain (RuvB-H). Positions 294, 313, and 318 each coordinate DNA.

The protein belongs to the RuvB family. Homohexamer. Forms an RuvA(8)-RuvB(12)-Holliday junction (HJ) complex. HJ DNA is sandwiched between 2 RuvA tetramers; dsDNA enters through RuvA and exits via RuvB. An RuvB hexamer assembles on each DNA strand where it exits the tetramer. Each RuvB hexamer is contacted by two RuvA subunits (via domain III) on 2 adjacent RuvB subunits; this complex drives branch migration. In the full resolvosome a probable DNA-RuvA(4)-RuvB(12)-RuvC(2) complex forms which resolves the HJ.

It is found in the cytoplasm. The enzyme catalyses ATP + H2O = ADP + phosphate + H(+). In terms of biological role, the RuvA-RuvB-RuvC complex processes Holliday junction (HJ) DNA during genetic recombination and DNA repair, while the RuvA-RuvB complex plays an important role in the rescue of blocked DNA replication forks via replication fork reversal (RFR). RuvA specifically binds to HJ cruciform DNA, conferring on it an open structure. The RuvB hexamer acts as an ATP-dependent pump, pulling dsDNA into and through the RuvAB complex. RuvB forms 2 homohexamers on either side of HJ DNA bound by 1 or 2 RuvA tetramers; 4 subunits per hexamer contact DNA at a time. Coordinated motions by a converter formed by DNA-disengaged RuvB subunits stimulates ATP hydrolysis and nucleotide exchange. Immobilization of the converter enables RuvB to convert the ATP-contained energy into a lever motion, pulling 2 nucleotides of DNA out of the RuvA tetramer per ATP hydrolyzed, thus driving DNA branch migration. The RuvB motors rotate together with the DNA substrate, which together with the progressing nucleotide cycle form the mechanistic basis for DNA recombination by continuous HJ branch migration. Branch migration allows RuvC to scan DNA until it finds its consensus sequence, where it cleaves and resolves cruciform DNA. This is Holliday junction branch migration complex subunit RuvB from Shewanella sp. (strain MR-4).